The sequence spans 309 residues: Malate dehydrogenase (309 aa).

NAD(+) contacts are provided by residues 8–13 (GAGLVG) and aspartate 33. Substrate contacts are provided by arginine 82 and arginine 88. NAD(+) is bound by residues asparagine 95 and 118-120 (VSN). Substrate-binding residues include asparagine 120 and arginine 151. Histidine 175 serves as the catalytic Proton acceptor.

It belongs to the LDH/MDH superfamily. MDH type 3 family.

The catalysed reaction is (S)-malate + NAD(+) = oxaloacetate + NADH + H(+). In terms of biological role, catalyzes the reversible oxidation of malate to oxaloacetate. This chain is Malate dehydrogenase, found in Pseudomonas putida (strain ATCC 700007 / DSM 6899 / JCM 31910 / BCRC 17059 / LMG 24140 / F1).